The primary structure comprises 1049 residues: MKMADAKQKRNEQLKRWIGSETDLEPPLLKKKKTKVKFDDGAVFLAACSSGDTEEVLRMLDRGADINYANVDGLTALHQACIDDNVDMVTFLVEHGACINQPDNEGWIPLHAAASCGYLDIAEYLISQGASVGVVNSEGETPLDIAEEEAMEELLQNEINRQGVDIEAARKEEERIMLRDARQWLNSGQINDVRHTKSGGTALHVAAAKGYAEVLKLLIQAGYDVNIKDYDGWTPLHAAAHWGKEEACRILVEHLCDMDVVNKVGQTAFDVADEDILGYLEELQKKQNLLLSEKKDVKKSPLIETTTTGDNNQSVKPLKSKETLLLEPEKTAPRIETLEPEKVDEEEGEGKKDESSCSSEEEEEEDSESENEADKTKSSVPSSVSNSTPTTAPSSITVTSPTTPSNQVTTPTSPTKKVSTPAGKLSPKEEDRKDESPASWRLGLRKTGSYGALAEISTTKEAQKEKDTAGVMRSASSPRLSSSLDNKDKEKEKEKTRLAYVAPTIPRRHVSTSDIDEKENRDSAASLVRSGSYTRRRWEEDLKNSDGTASTNRTSSYQRSTSHTLALGRTSSSRDLPAKSSSASSLEPNNSKAWQPSSYYQSYSIHRSGSFGRRHEDPLSSTSSSTTTTTTTSSVTSPTGHRSLLSRYWAEESAEKEKEKEKESATVIPTINTAGTTTTTSTTGTVLGSDGRERRRSYLTPVRDEESESQRKARSRQARQSRRSTQGVTLTDLQEAEKTIGRSRPTRPREDEKEEKEKQDKEKQEEKKETETKEDDYRSRYRSFEEKYRTSLASSTTASSTIPSSSSSSSSSLYSTSSLNRPNSLTGLTSTYSRSTRDTDRESDRKEKDEDRDGDDKSQPRSIRDRRRPREKRRSTGVSFWTQDSDENEPDHPSDSEGSTKGEPQSDRLSSNDPLSTSTSSTDRYESLSSRGIGESRRPYSRFEKDDSTDYKKLYEQILAENEKLKAQLRDTELELSDLKLQLEKATQRQERFADRSQLEMEKRERRALERKISEMEEELKMLPDLKADNQRLKDENGALIRVISKLSK.

6 ANK repeats span residues 39 to 68 (DDGAVFLAACSSGDTEEVLRMLDRGADINY), 72 to 101 (DGLTALHQACIDDNVDMVTFLVEHGACINQ), 105 to 134 (EGWIPLHAAASCGYLDIAEYLISQGASVGV), 138 to 164 (EGETPLDIAEEEAMEELLQNEINRQGV), 198 to 227 (SGGTALHVAAAKGYAEVLKLLIQAGYDVNI), and 231 to 260 (DGWTPLHAAAHWGKEEACRILVEHLCDMDV). Residues 302-947 (LIETTTTGDN…RPYSRFEKDD (646 aa)) form a disordered region. Residues 303 to 315 (IETTTTGDNNQSV) are compositionally biased toward polar residues. The segment covering 319–341 (KSKETLLLEPEKTAPRIETLEPE) has biased composition (basic and acidic residues). Over residues 359 to 371 (SEEEEEEDSESEN) the composition is skewed to acidic residues. Positions 378–421 (SSVPSSVSNSTPTTAPSSITVTSPTTPSNQVTTPTSPTKKVSTP) are enriched in low complexity. Positions 426–436 (SPKEEDRKDES) are enriched in basic and acidic residues. The segment covering 473–484 (RSASSPRLSSSL) has biased composition (low complexity). The segment covering 485 to 497 (DNKDKEKEKEKTR) has biased composition (basic and acidic residues). Residues 545–564 (SDGTASTNRTSSYQRSTSHT) show a composition bias toward polar residues. Low complexity predominate over residues 571–592 (SSSRDLPAKSSSASSLEPNNSK). The span at 593 to 607 (AWQPSSYYQSYSIHR) shows a compositional bias: polar residues. Residues 620-639 (SSTSSSTTTTTTTSSVTSPT) are compositionally biased toward low complexity. Basic and acidic residues predominate over residues 649–664 (WAEESAEKEKEKEKES). The span at 665–686 (ATVIPTINTAGTTTTTSTTGTV) shows a compositional bias: low complexity. A compositionally biased stretch (basic and acidic residues) spans 702-711 (VRDEESESQR). The segment covering 712 to 722 (KARSRQARQSR) has biased composition (basic residues). A compositionally biased stretch (basic and acidic residues) spans 747-789 (RPREDEKEEKEKQDKEKQEEKKETETKEDDYRSRYRSFEEKYR). Positions 790 to 819 (TSLASSTTASSTIPSSSSSSSSSLYSTSSL) are enriched in low complexity. Polar residues predominate over residues 820–829 (NRPNSLTGLT). Residues 835 to 863 (STRDTDRESDRKEKDEDRDGDDKSQPRSI) are compositionally biased toward basic and acidic residues. A compositionally biased stretch (basic residues) spans 864 to 875 (RDRRRPREKRRS). 2 stretches are compositionally biased toward basic and acidic residues: residues 890 to 906 (PDHPSDSEGSTKGEPQS) and 934 to 947 (GESRRPYSRFEKDD).

As to quaternary structure, PP1 comprises a catalytic subunit, and one or several targeting or regulatory subunits. Ppp1r12a mediates binding to myosin.

It localises to the cytoplasm. Its function is as follows. Regulates myosin phosphatase activity. The sequence is that of Protein phosphatase 1 regulatory subunit 12A (ppp1r12a) from Danio rerio (Zebrafish).